Here is a 70-residue protein sequence, read N- to C-terminus: MPGIKLTPRDSFDDAYRKFKRQSDRNLIVTEARARQHYETKTEKRKKEKIATRKKILKKLFMLRRYESRL.

This sequence belongs to the bacterial ribosomal protein bS21 family.

This is Small ribosomal subunit protein bS21 from Sulfurovum sp. (strain NBC37-1).